A 182-amino-acid chain; its full sequence is Adenine phosphoribosyltransferase (182 aa).

It belongs to the purine/pyrimidine phosphoribosyltransferase family. As to quaternary structure, homodimer.

The protein resides in the cytoplasm. The enzyme catalyses AMP + diphosphate = 5-phospho-alpha-D-ribose 1-diphosphate + adenine. It functions in the pathway purine metabolism; AMP biosynthesis via salvage pathway; AMP from adenine: step 1/1. Its function is as follows. Catalyzes a salvage reaction resulting in the formation of AMP, that is energically less costly than de novo synthesis. This chain is Adenine phosphoribosyltransferase, found in Campylobacter fetus subsp. fetus (strain 82-40).